Here is a 71-residue protein sequence, read N- to C-terminus: Gas vesicle protein A (71 aa).

The protein belongs to the gas vesicle GvpA family. The gas vesicle shell is 2 nm thick and consists of a single layer of this protein. It forms helical ribs nearly perpendicular to the long axis of the vesicle.

It localises to the gas vesicle shell. Its function is as follows. Gas vesicles are hollow, gas filled proteinaceous nanostructures found in some microorganisms. During planktonic growth they allow positioning of the organism at a favorable depth for light or nutrient acquisition. GvpA forms the protein shell. Functionally, cluster expression in E.coli (gvpA1-gvpA2-gvpC-gvpN-gvpJ-gvpK-gvpF-gvpG-gvpV-gvpW) allows cells to float and produces irregularly shaped gas vesicles. This is Gas vesicle protein A from Nostoc sp. (strain PCC 7120 / SAG 25.82 / UTEX 2576).